Reading from the N-terminus, the 447-residue chain is Elongation factor 1-alpha (447 aa).

The tr-type G domain occupies 5 to 230; that stretch reads KIHISIVVIG…DQISEPKRPS (226 aa). Positions 14 to 21 are G1; the sequence is GHVDSGKS. Residue 14 to 21 participates in GTP binding; it reads GHVDSGKS. Position 55 is an N6,N6-dimethyllysine (K55). Residues 70 to 74 form a G2 region; the sequence is GITID. Residue K79 is modified to N6,N6,N6-trimethyllysine. Residues 91 to 94 are G3; that stretch reads DAPG. GTP is bound by residues 91 to 95 and 153 to 156; these read DAPGH and NKMD. The segment at 153–156 is G4; the sequence is NKMD. K187 bears the N6,N6,N6-trimethyllysine mark. The segment at 194–196 is G5; sequence SGF. K261 carries the N6-methyllysine modification. E289 is modified (5-glutamyl glycerylphosphorylethanolamine). K306 is subject to N6,N6,N6-trimethyllysine. E362 carries the 5-glutamyl glycerylphosphorylethanolamine modification. Residue K396 is modified to N6,N6,N6-trimethyllysine.

The protein belongs to the TRAFAC class translation factor GTPase superfamily. Classic translation factor GTPase family. EF-Tu/EF-1A subfamily.

It is found in the cytoplasm. In terms of biological role, this protein promotes the GTP-dependent binding of aminoacyl-tRNA to the A-site of ribosomes during protein biosynthesis. This Daucus carota (Wild carrot) protein is Elongation factor 1-alpha.